The primary structure comprises 365 residues: UDP-N-acetylglucosamine--N-acetylmuramyl-(pentapeptide) pyrophosphoryl-undecaprenol N-acetylglucosamine transferase (365 aa).

Residues 19 to 21 (TGG), N131, R170, S201, I255, 274 to 279 (ALTVTE), and Q300 contribute to the UDP-N-acetyl-alpha-D-glucosamine site.

It belongs to the glycosyltransferase 28 family. MurG subfamily.

Its subcellular location is the cell inner membrane. It carries out the reaction di-trans,octa-cis-undecaprenyl diphospho-N-acetyl-alpha-D-muramoyl-L-alanyl-D-glutamyl-meso-2,6-diaminopimeloyl-D-alanyl-D-alanine + UDP-N-acetyl-alpha-D-glucosamine = di-trans,octa-cis-undecaprenyl diphospho-[N-acetyl-alpha-D-glucosaminyl-(1-&gt;4)]-N-acetyl-alpha-D-muramoyl-L-alanyl-D-glutamyl-meso-2,6-diaminopimeloyl-D-alanyl-D-alanine + UDP + H(+). The protein operates within cell wall biogenesis; peptidoglycan biosynthesis. In terms of biological role, cell wall formation. Catalyzes the transfer of a GlcNAc subunit on undecaprenyl-pyrophosphoryl-MurNAc-pentapeptide (lipid intermediate I) to form undecaprenyl-pyrophosphoryl-MurNAc-(pentapeptide)GlcNAc (lipid intermediate II). In Acinetobacter baumannii (strain AB307-0294), this protein is UDP-N-acetylglucosamine--N-acetylmuramyl-(pentapeptide) pyrophosphoryl-undecaprenol N-acetylglucosamine transferase.